We begin with the raw amino-acid sequence, 211 residues long: Fucoxanthin-chlorophyll a-c binding protein F, chloroplastic (211 aa).

A chloroplast-targeting transit peptide spans Ala-1–Met-33. Transmembrane regions (helical) follow at residues Ile-75–Leu-95, Ile-116–Met-136, and Gly-177–Pro-197.

It belongs to the fucoxanthin chlorophyll protein family. The LHC complex of chromophytic algae is composed of fucoxanthin, chlorophyll A and C bound non-covalently by fucoxanthin chlorophyll proteins (FCPs). The ratio of pigments in this LHC is; fucoxanthin: chlorophyll C: chlorophyll A; (0.6-1): (0.1-0.3): (1).

It is found in the plastid. The protein localises to the chloroplast thylakoid membrane. Functionally, the light-harvesting complex (LHC) functions as a light receptor, it captures and delivers excitation energy to photosystems with which it is closely associated. Energy is transferred from the carotenoid and chlorophyll C (or B) to chlorophyll A and the photosynthetic reaction centers where it is used to synthesize ATP and reducing power. The polypeptide is Fucoxanthin-chlorophyll a-c binding protein F, chloroplastic (FCPF) (Macrocystis pyrifera (Giant kelp)).